The chain runs to 288 residues: Eukaryotic translation initiation factor 3 subunit G (288 aa).

The disordered stretch occupies residues 1 to 35 (MSRVANNRDWADDEDLEDSNELPQSTTTTNKDGTQ). A compositionally biased stretch (acidic residues) spans 11–20 (ADDEDLEDSN). Polar residues predominate over residues 21–35 (ELPQSTTTTNKDGTQ). The RRM domain occupies 208–286 (ATLRVTNVSE…LILRVEFAKK (79 aa)).

It belongs to the eIF-3 subunit G family. Component of the eukaryotic translation initiation factor 3 (eIF-3) complex.

The protein resides in the cytoplasm. Its function is as follows. RNA-binding component of the eukaryotic translation initiation factor 3 (eIF-3) complex, which is involved in protein synthesis of a specialized repertoire of mRNAs and, together with other initiation factors, stimulates binding of mRNA and methionyl-tRNAi to the 40S ribosome. The eIF-3 complex specifically targets and initiates translation of a subset of mRNAs involved in cell proliferation. This subunit can bind 18S rRNA. The chain is Eukaryotic translation initiation factor 3 subunit G (tif35) from Botryotinia fuckeliana (strain B05.10) (Noble rot fungus).